Reading from the N-terminus, the 152-residue chain is Large ribosomal subunit protein uL15 (152 aa).

Residues 1-12 (MTSTLNTLKSNT) are compositionally biased toward polar residues. The interval 1–57 (MTSTLNTLKSNTGSRKKKLRKGRGIAAGQGASCGFGMRGQKSRSGRPTRPGFEGGQM) is disordered. Positions 14–23 (SRKKKLRKGR) are enriched in basic residues. A compositionally biased stretch (gly residues) spans 25–37 (IAAGQGASCGFGM).

The protein belongs to the universal ribosomal protein uL15 family. As to quaternary structure, part of the 50S ribosomal subunit.

Binds to the 23S rRNA. This Prochlorococcus marinus subsp. pastoris (strain CCMP1986 / NIES-2087 / MED4) protein is Large ribosomal subunit protein uL15.